Consider the following 80-residue polypeptide: Conotoxin SmIVA (80 aa).

An N-terminal signal peptide occupies residues 1–21 (MGMRMMFTVFLLVVLATTVVS). The propeptide occupies 22–38 (IPSDRASDGRNAAVNER). At Q39 the chain carries Pyrrolidone carboxylic acid. O-linked (HexNAc...) serine glycosylation is present at S45. P55, P60, P70, and P72 each carry 4-hydroxyproline. Residue S75 is modified to Serine amide. Residues 76–80 (GRRND) constitute a propeptide that is removed on maturation.

It belongs to the conotoxin A superfamily. Contains 3 disulfide bonds. In terms of tissue distribution, expressed by the venom duct.

It localises to the secreted. In terms of biological role, neurotoxin with probable activity on sodium channel. Induces intense repetitive firing of the frog neuromuscular junction, leading to a tetanic contracture in muscle fiber (spastic paralysis). In vivo, shows the same effect as the whole venom when injected on fish prey. The chain is Conotoxin SmIVA from Conus stercusmuscarum (Fly-specked cone).